The primary structure comprises 125 residues: MIYGTGVDIVEIARFEKFLQQGNDALFDRIFTPSEIEYCSSKKHSAQHYALRFAAKESFLKALGTGLRDGISWKDMEVVNDQLGKPELKLYRRAEELFRQAGLGACFLSLSHDAGCAVAMVVLER.

Residues D8 and E57 each contribute to the Mg(2+) site.

This sequence belongs to the P-Pant transferase superfamily. AcpS family. It depends on Mg(2+) as a cofactor.

Its subcellular location is the cytoplasm. The catalysed reaction is apo-[ACP] + CoA = holo-[ACP] + adenosine 3',5'-bisphosphate + H(+). Functionally, transfers the 4'-phosphopantetheine moiety from coenzyme A to a Ser of acyl-carrier-protein. The sequence is that of Holo-[acyl-carrier-protein] synthase from Geobacter sp. (strain M21).